The sequence spans 134 residues: Small ribosomal subunit protein uS9c (134 aa).

Positions 105-114 (DHHLTRDARA) are enriched in basic and acidic residues. Positions 105–134 (DHHLTRDARAKERKKYGLHKARKAPQYSKR) are disordered. A compositionally biased stretch (basic residues) spans 115 to 134 (KERKKYGLHKARKAPQYSKR).

This sequence belongs to the universal ribosomal protein uS9 family.

It is found in the plastid. The protein resides in the cyanelle. The chain is Small ribosomal subunit protein uS9c (rps9) from Cyanophora paradoxa.